Here is a 500-residue protein sequence, read N- to C-terminus: MSLIDTRIPEPKRFISGATGDWEVVIGMEVHAQVTSESKLFSGASTSFGAEPNSNVSLVDAAMPGMLPVINLECVKQAVRTGIGLNAQINLKSVFDRKNYFYPDLPQGYQISQFKQPIVGEGKIMISVGPDNKGQFEDVEIGIERLHLEQDAGKSMHDQHPTMSYVDLNRSGVALMEIVSKPDLRSSDEARAYLTKLRTIVRYLGTCDGNMDEGSMRADVNVSVRRPGGEFGTRCEIKNVNSIRFVGQAIEYEARRQIAILEDGGSIDQETRLFDPVKGETRSMRSKEEAHDYRYFPDPDLLPLEFDQAFVDALAVDLPELPDVKKQRLVEKQGISIYDASILVTEKAIADYYESVAAGRDGKAAANWVINDLLGALNKAGKDIEESPVSPEQLGAVIDLIKEGTISGKIAKDLFEIVWNEGGDPKKLVEERGMKQVTDTGAIEKAVDDVIAANPEKVEQAKAKPTLAGWFVGQVMKATGGKANPQSVNELVKAKLGIEE.

It belongs to the GatB/GatE family. GatB subfamily. As to quaternary structure, heterotrimer of A, B and C subunits.

It carries out the reaction L-glutamyl-tRNA(Gln) + L-glutamine + ATP + H2O = L-glutaminyl-tRNA(Gln) + L-glutamate + ADP + phosphate + H(+). The enzyme catalyses L-aspartyl-tRNA(Asn) + L-glutamine + ATP + H2O = L-asparaginyl-tRNA(Asn) + L-glutamate + ADP + phosphate + 2 H(+). Allows the formation of correctly charged Asn-tRNA(Asn) or Gln-tRNA(Gln) through the transamidation of misacylated Asp-tRNA(Asn) or Glu-tRNA(Gln) in organisms which lack either or both of asparaginyl-tRNA or glutaminyl-tRNA synthetases. The reaction takes place in the presence of glutamine and ATP through an activated phospho-Asp-tRNA(Asn) or phospho-Glu-tRNA(Gln). This Brucella anthropi (strain ATCC 49188 / DSM 6882 / CCUG 24695 / JCM 21032 / LMG 3331 / NBRC 15819 / NCTC 12168 / Alc 37) (Ochrobactrum anthropi) protein is Aspartyl/glutamyl-tRNA(Asn/Gln) amidotransferase subunit B.